A 414-amino-acid polypeptide reads, in one-letter code: Glucose-1-phosphate adenylyltransferase (414 aa).

Residues Tyr99, Gly164, 181–182, and Ser199 contribute to the alpha-D-glucose 1-phosphate site; that span reads EK.

This sequence belongs to the bacterial/plant glucose-1-phosphate adenylyltransferase family. In terms of assembly, homotetramer.

The enzyme catalyses alpha-D-glucose 1-phosphate + ATP + H(+) = ADP-alpha-D-glucose + diphosphate. It participates in glycan biosynthesis; glycogen biosynthesis. In terms of biological role, involved in the biosynthesis of ADP-glucose, a building block required for the elongation reactions to produce glycogen. Catalyzes the reaction between ATP and alpha-D-glucose 1-phosphate (G1P) to produce pyrophosphate and ADP-Glc. This chain is Glucose-1-phosphate adenylyltransferase, found in Bifidobacterium adolescentis (strain ATCC 15703 / DSM 20083 / NCTC 11814 / E194a).